The following is a 318-amino-acid chain: ATP phosphoribosyltransferase regulatory subunit (318 aa).

It belongs to the class-II aminoacyl-tRNA synthetase family. HisZ subfamily. As to quaternary structure, heteromultimer composed of HisG and HisZ subunits.

The protein resides in the cytoplasm. Its pathway is amino-acid biosynthesis; L-histidine biosynthesis; L-histidine from 5-phospho-alpha-D-ribose 1-diphosphate: step 1/9. In terms of biological role, required for the first step of histidine biosynthesis. May allow the feedback regulation of ATP phosphoribosyltransferase activity by histidine. The sequence is that of ATP phosphoribosyltransferase regulatory subunit from Lactococcus lactis subsp. cremoris (strain MG1363).